Reading from the N-terminus, the 58-residue chain is UPF0391 membrane protein Sden_3712 (58 aa).

A run of 2 helical transmembrane segments spans residues 6–26 (LTFL…IAGA) and 27–47 (AAGI…ISLV).

Belongs to the UPF0391 family.

Its subcellular location is the cell membrane. This is UPF0391 membrane protein Sden_3712 from Shewanella denitrificans (strain OS217 / ATCC BAA-1090 / DSM 15013).